The primary structure comprises 186 residues: MKKNTGFDSGIEKLARKTASKTGRRSFIGKLGGFLVGSALLPLLPVDRRGRMNEAHAETKGVLGREGYKPQDKDPKSCDYWRHCSIDGNLCDCCGGSLTSCPPGTELSPSSWVASCFNPGDGQTYLIAYRDCCGKQTCGRCNCVNVQGELPVYRPEFNNDIVWCFGADNDAMTYHCTVSPIVGKAS.

The segment at residues 1–57 (MKKNTGFDSGIEKLARKTASKTGRRSFIGKLGGFLVGSALLPLLPVDRRGRMNEAHA) is a signal peptide (tat-type signal). Intrachain disulfides connect C78-C143, C84-C116, C91-C176, C93-C141, C101-C132, and C133-C164. W112 is modified (tryptophylquinone). Residues 112 to 163 (WVASCFNPGDGQTYLIAYRDCCGKQTCGRCNCVNVQGELPVYRPEFNNDIVW) constitute a cross-link (tryptophan tryptophylquinone (Trp-Trp)).

It belongs to the aromatic amine dehydrogenase light chain family. Heterotetramer of two light and two heavy chains. It depends on tryptophan tryptophylquinone residue as a cofactor. Predicted to be exported by the Tat system. The position of the signal peptide cleavage has not been experimentally proven. Post-translationally, tryptophan tryptophylquinone (TTQ) is formed by oxidation of the indole ring of a tryptophan to form tryptophylquinone followed by covalent cross-linking with another tryptophan residue.

It is found in the periplasm. It catalyses the reaction 2 oxidized [amicyanin] + methylamine + H2O = 2 reduced [amicyanin] + formaldehyde + NH4(+) + 2 H(+). Its pathway is one-carbon metabolism; methylamine degradation; formaldehyde from methylamine: step 1/1. In terms of biological role, methylamine dehydrogenase carries out the oxidation of methylamine. Electrons are passed from methylamine dehydrogenase to amicyanin. The protein is Methylamine dehydrogenase light chain (mauA) of Methylobacillus flagellatus (strain ATCC 51484 / DSM 6875 / VKM B-1610 / KT).